We begin with the raw amino-acid sequence, 83 residues long: Large ribosomal subunit protein bL27 (83 aa).

The segment at 1–22 (MAHKKGQGSTRNGRDSHSKRLG) is disordered.

This sequence belongs to the bacterial ribosomal protein bL27 family.

In Protochlamydia amoebophila (strain UWE25), this protein is Large ribosomal subunit protein bL27.